A 279-amino-acid polypeptide reads, in one-letter code: Large ribosomal subunit protein uL2 (279 aa).

The segment at 223–279 is disordered; sequence PVAMNPVDHPMGGGEGRASGGHPRSRKGLPAKGFKTRSRTKASNKYIVERRKTRKKK. Residues 245–264 are compositionally biased toward basic residues; that stretch reads PRSRKGLPAKGFKTRSRTKA.

This sequence belongs to the universal ribosomal protein uL2 family. Part of the 50S ribosomal subunit. Forms a bridge to the 30S subunit in the 70S ribosome.

Its function is as follows. One of the primary rRNA binding proteins. Required for association of the 30S and 50S subunits to form the 70S ribosome, for tRNA binding and peptide bond formation. It has been suggested to have peptidyltransferase activity; this is somewhat controversial. Makes several contacts with the 16S rRNA in the 70S ribosome. The protein is Large ribosomal subunit protein uL2 of Christiangramia forsetii (strain DSM 17595 / CGMCC 1.15422 / KT0803) (Gramella forsetii).